We begin with the raw amino-acid sequence, 177 residues long: Large ribosomal subunit protein uL6 (177 aa).

The protein belongs to the universal ribosomal protein uL6 family. As to quaternary structure, part of the 50S ribosomal subunit.

In terms of biological role, this protein binds to the 23S rRNA, and is important in its secondary structure. It is located near the subunit interface in the base of the L7/L12 stalk, and near the tRNA binding site of the peptidyltransferase center. In Polynucleobacter asymbioticus (strain DSM 18221 / CIP 109841 / QLW-P1DMWA-1) (Polynucleobacter necessarius subsp. asymbioticus), this protein is Large ribosomal subunit protein uL6.